Consider the following 314-residue polypeptide: tRNA dimethylallyltransferase (314 aa).

8 to 15 contributes to the ATP binding site; sequence GPTGAGKS. 10-15 provides a ligand contact to substrate; it reads TGAGKS.

This sequence belongs to the IPP transferase family. As to quaternary structure, monomer. Mg(2+) serves as cofactor.

It carries out the reaction adenosine(37) in tRNA + dimethylallyl diphosphate = N(6)-dimethylallyladenosine(37) in tRNA + diphosphate. Its function is as follows. Catalyzes the transfer of a dimethylallyl group onto the adenine at position 37 in tRNAs that read codons beginning with uridine, leading to the formation of N6-(dimethylallyl)adenosine (i(6)A). The sequence is that of tRNA dimethylallyltransferase from Mycobacterium tuberculosis (strain ATCC 25177 / H37Ra).